A 488-amino-acid polypeptide reads, in one-letter code: ATP synthase subunit beta, chloroplastic (488 aa).

170–177 contacts ATP; sequence GGAGVGKT.

It belongs to the ATPase alpha/beta chains family. In terms of assembly, F-type ATPases have 2 components, CF(1) - the catalytic core - and CF(0) - the membrane proton channel. CF(1) has five subunits: alpha(3), beta(3), gamma(1), delta(1), epsilon(1). CF(0) has four main subunits: a(1), b(1), b'(1) and c(9-12).

It is found in the plastid. It localises to the chloroplast thylakoid membrane. It catalyses the reaction ATP + H2O + 4 H(+)(in) = ADP + phosphate + 5 H(+)(out). In terms of biological role, produces ATP from ADP in the presence of a proton gradient across the membrane. The catalytic sites are hosted primarily by the beta subunits. In Picea abies (Norway spruce), this protein is ATP synthase subunit beta, chloroplastic.